The following is a 92-amino-acid chain: MTKGTSSFGKRHNKTHTLCRRCGRRSYHIQKSTCANCGYPAAKTRKYNWSEKAKRRKTTGSGRTAHLRDVHRRFKNGFQVGTPKGARGPENH.

Zn(2+) is bound by residues Cys19, Cys22, Cys34, and Cys37. The segment at 19 to 37 (CRRCGRRSYHIQKSTCANC) adopts a C4-type zinc-finger fold. The disordered stretch occupies residues 50–92 (SEKAKRRKTTGSGRTAHLRDVHRRFKNGFQVGTPKGARGPENH).

This sequence belongs to the eukaryotic ribosomal protein eL37 family. The cofactor is Zn(2+).

Binds to the 23S rRNA. This is Large ribosomal subunit protein eL37 (rpl37) from Emericella nidulans (strain FGSC A4 / ATCC 38163 / CBS 112.46 / NRRL 194 / M139) (Aspergillus nidulans).